Consider the following 235-residue polypeptide: tRNA pseudouridine synthase B (235 aa).

D45 (nucleophile) is an active-site residue.

The protein belongs to the pseudouridine synthase TruB family. Type 1 subfamily.

The catalysed reaction is uridine(55) in tRNA = pseudouridine(55) in tRNA. Functionally, responsible for synthesis of pseudouridine from uracil-55 in the psi GC loop of transfer RNAs. The polypeptide is tRNA pseudouridine synthase B (Chlamydia felis (strain Fe/C-56) (Chlamydophila felis)).